The chain runs to 243 residues: Ras-related protein Rab-12 (243 aa).

Residue Met1 is modified to N-acetylmethionine. The interval Met1–Arg36 is disordered. Phosphoserine is present on residues Ser20 and Ser24. Residues Gly51, Val52, Gly53, Lys54, Thr55, Ser72, and Thr73 each coordinate GTP. Mg(2+) is bound at residue Thr55. 2 consecutive short sequence motifs (switch) follow at residues Asp64 to Phe78 and Asp96 to Ser113. Thr73 and Asp96 together coordinate Mg(2+). Gly99 provides a ligand contact to GTP. Ser105 is subject to Phosphoserine. Residues Asn154, Lys155, Asp157, Ser185, Ala186, and Lys187 each coordinate GTP. 2 S-geranylgeranyl cysteine lipidation sites follow: Cys242 and Cys243.

It belongs to the small GTPase superfamily. Rab family. As to quaternary structure, interacts with RABIF and OPTN. Interacts with LRRK2; interaction facilitates phosphorylation of Ser-105. Interacts with GDI1, GDI2 and CHM; these interactions are disrupted by phosphorylation on Ser-105. Interacts with RILPL1 and RILPL2; these interactions are dependent on phosphorylation of Ser-105. Mg(2+) is required as a cofactor. In terms of processing, phosphorylation of Ser-105 in the switch II region by LRRK2 prevents the association of RAB regulatory proteins, including CHM and RAB GDP dissociation inhibitors GDI1 and GDI2. In terms of tissue distribution, highest levels in skeletal and cardiac muscle. Also found in comparable amounts in brain, spinal cord and lung. Also detected in testis where it is expressed by Sertoli cells of the seminiferous tubules (at protein level).

It localises to the recycling endosome membrane. It is found in the lysosome membrane. The protein localises to the golgi apparatus membrane. The protein resides in the cytoplasmic vesicle. Its subcellular location is the autophagosome. The catalysed reaction is GTP + H2O = GDP + phosphate + H(+). Its activity is regulated as follows. Regulated by guanine nucleotide exchange factors (GEFs) including DENND3 which promote the exchange of bound GDP for free GTP. Regulated by GTPase activating proteins (GAPs) which increase the GTP hydrolysis activity. Inhibited by GDP dissociation inhibitors (GDIs). The small GTPases Rab are key regulators of intracellular membrane trafficking, from the formation of transport vesicles to their fusion with membranes. Rabs cycle between an inactive GDP-bound form and an active GTP-bound form that is able to recruit to membranes different sets of downstream effectors directly responsible for vesicle formation, movement, tethering and fusion. RAB12 may play a role in protein transport from recycling endosomes to lysosomes regulating, for instance, the degradation of the transferrin receptor. Involved in autophagy. This Rattus norvegicus (Rat) protein is Ras-related protein Rab-12.